Reading from the N-terminus, the 411-residue chain is UDP-N-acetylmuramoylalanine--D-glutamate ligase (411 aa).

92-98 lines the ATP pocket; the sequence is GTDGKST.

Belongs to the MurCDEF family.

It is found in the cytoplasm. It carries out the reaction UDP-N-acetyl-alpha-D-muramoyl-L-alanine + D-glutamate + ATP = UDP-N-acetyl-alpha-D-muramoyl-L-alanyl-D-glutamate + ADP + phosphate + H(+). The protein operates within cell wall biogenesis; peptidoglycan biosynthesis. Cell wall formation. Catalyzes the addition of glutamate to the nucleotide precursor UDP-N-acetylmuramoyl-L-alanine (UMA). The chain is UDP-N-acetylmuramoylalanine--D-glutamate ligase from Hydrogenobaculum sp. (strain Y04AAS1).